The sequence spans 107 residues: MDQTVYSNIPRYTYDPYYTDNPYYGGWAYGTLDPYRRCGGYGGYGAFAIPPWRGLNSYEGFGKVYRPWAGRSLLVAPAIYRAGSGPVGSTPWGSGRQVNAARPIGGR.

The interval 88–107 (GSTPWGSGRQVNAARPIGGR) is disordered.

The protein resides in the virion. This is an uncharacterized protein from Acanthamoeba polyphaga (Amoeba).